Reading from the N-terminus, the 457-residue chain is 11S globulin seed storage protein Ana o 2.0101 (457 aa).

An N-terminal signal peptide occupies residues 1 to 14 (LSVCFLILFHGCLA). The igE-binding stretch occupies residues 15-29 (SRQEWQQQDECQIDR). Disulfide bonds link C25-C58 and C101-C278. 2 conformational epitope; mouse monoclonal antibody (mAb) 2B5-binding regions span residues 29–37 (RLDALEPDN) and 31–48 (DALEPDNRVEYEAGTVEA). Residues 30–220 (LDALEPDNRV…AFQVDERLIK (191 aa)) form the Cupin type-1 1 domain. 2 binds goat polyclonal antibodies (pAbs) regions span residues 32–45 (ALEPDNRVEYEAGT) and 55–86 (QFRCAGVALVRHTIQPNGLLLPQYSNAPQLIY). The mouse monoclonal antibody (mAb) 2B5-binding stretch occupies residues 34-57 (EPDNRVEYEAGTVEAWDPNHEQFR). A mouse monoclonal antibody (mAb) 4H9-binding region spans residues 41–55 (YEAGTVEAWDPNHEQ). The tract at residues 105–119 (YQAPQQGRQQGQSGR) is igE-binding. A binds goat polyclonal antibodies (pAbs) region spans residues 215–239 (DERLIKQLKSEDNRGGIVKVKDDEL). Positions 233 to 252 (KVKDDELRVIRPSRSQSERG) are CD4(+) T cell-reactive epitope. Positions 243–270 (RPSRSQSERGSESEEESEDEKRRWGQRD) are disordered. Residues 261 to 270 (DEKRRWGQRD) show a composition bias toward basic and acidic residues. Residues 265–289 (RWGQRDNGIEETICTMRLKENINDP) form a linear epitope; mouse monoclonal antibody (mAb) 1F5-binding region. Residues 271–276 (NGIEET) carry the NGXEET; peptidase recognition motif motif. Residues 284–433 (ENINDPARAD…AFQISREDAR (150 aa)) form the Cupin type-1 2 domain. CD4(+) T cell-reactive epitope regions lie at residues 289 to 308 (PARADIYTPEVGRLTTLNSL), 297 to 316 (PEVGRLTTLNSLNLPILKWL), 321 to 340 (EKGVLYKNALVLPHWNLNSH), 329 to 348 (ALVLPHWNLNSHSIIYGCKG), and 377 to 396 (QNFAVVKRAREERFEWISFK). The tract at residues 395-416 (FKTNDRAMTSPLAGRTSVLGGM) is binds goat polyclonal antibodies (pAbs), but buried in the 3D-structure model.

This sequence belongs to the 11S seed storage protein (globulins) family. In terms of assembly, homotrimer. Hexamer. Each subunit is composed of an acidic and a basic chain derived from a single precursor and linked by a disulfide bond. Proteolytically processed from a single precursor to produce an acidic and a basic chain that are linked by a disulfide bond. Not glycosylated. As to expression, expressed in seed (at protein level). Expressed in the juice of the cashew apple (at protein level).

Functionally, seed storage protein. The protein is 11S globulin seed storage protein Ana o 2.0101 of Anacardium occidentale (Cashew).